The primary structure comprises 419 residues: Transcription termination factor Rho (419 aa).

The Rho RNA-BD domain occupies 48–123 (DIFGDGVLEI…LKVNEVNFDK (76 aa)). 3 RNA-binding regions span residues 61–66 (GFGFLR), 78–80 (DIY), and 108–110 (ERY). ATP contacts are provided by residues 169-174 (GRGQRG), 181-186 (KAGKTM), and Arg212. Residues 284–288 (VLTGG) form an RNA-binding 2 region.

This sequence belongs to the Rho family. Homohexamer. The homohexamer assembles into an open ring structure.

Its function is as follows. Facilitates transcription termination by a mechanism that involves Rho binding to the nascent RNA, activation of Rho's RNA-dependent ATPase activity, and release of the mRNA from the DNA template. In Escherichia coli O157:H7, this protein is Transcription termination factor Rho.